The sequence spans 157 residues: 6,7-dimethyl-8-ribityllumazine synthase (157 aa).

Residues Phe22, 56-58, and 81-83 each bind 5-amino-6-(D-ribitylamino)uracil; these read AFE and VLI. Residue 86-87 participates in (2S)-2-hydroxy-3-oxobutyl phosphate binding; it reads ET. The active-site Proton donor is His89. Phe114 is a 5-amino-6-(D-ribitylamino)uracil binding site. Arg128 contributes to the (2S)-2-hydroxy-3-oxobutyl phosphate binding site.

The protein belongs to the DMRL synthase family.

It catalyses the reaction (2S)-2-hydroxy-3-oxobutyl phosphate + 5-amino-6-(D-ribitylamino)uracil = 6,7-dimethyl-8-(1-D-ribityl)lumazine + phosphate + 2 H2O + H(+). The protein operates within cofactor biosynthesis; riboflavin biosynthesis; riboflavin from 2-hydroxy-3-oxobutyl phosphate and 5-amino-6-(D-ribitylamino)uracil: step 1/2. In terms of biological role, catalyzes the formation of 6,7-dimethyl-8-ribityllumazine by condensation of 5-amino-6-(D-ribitylamino)uracil with 3,4-dihydroxy-2-butanone 4-phosphate. This is the penultimate step in the biosynthesis of riboflavin. This chain is 6,7-dimethyl-8-ribityllumazine synthase, found in Chlamydia trachomatis serovar L2 (strain ATCC VR-902B / DSM 19102 / 434/Bu).